The sequence spans 431 residues: Adenylosuccinate synthetase (431 aa).

GTP contacts are provided by residues G12–K18 and G40–T42. D13 serves as the catalytic Proton acceptor. D13 and G40 together coordinate Mg(2+). IMP-binding positions include D13–K16, N38–H41, T129, R143, Q224, T239, and R303. The active-site Proton donor is H41. Position 299 to 305 (V299 to R305) interacts with substrate. GTP contacts are provided by residues R305, K331–D333, and G413–G415.

The protein belongs to the adenylosuccinate synthetase family. Homodimer. Requires Mg(2+) as cofactor.

Its subcellular location is the cytoplasm. It catalyses the reaction IMP + L-aspartate + GTP = N(6)-(1,2-dicarboxyethyl)-AMP + GDP + phosphate + 2 H(+). The protein operates within purine metabolism; AMP biosynthesis via de novo pathway; AMP from IMP: step 1/2. In terms of biological role, plays an important role in the de novo pathway of purine nucleotide biosynthesis. Catalyzes the first committed step in the biosynthesis of AMP from IMP. In Mycobacteroides abscessus (strain ATCC 19977 / DSM 44196 / CCUG 20993 / CIP 104536 / JCM 13569 / NCTC 13031 / TMC 1543 / L948) (Mycobacterium abscessus), this protein is Adenylosuccinate synthetase.